Reading from the N-terminus, the 699-residue chain is Tectonic-like complex member Mks1 (699 aa).

Disordered stretches follow at residues arginine 101–isoleucine 121 and aspartate 373–aspartate 396. Basic and acidic residues predominate over residues histidine 108–glycine 119. A C2 B9-type domain is found at lysine 434–asparagine 560. The interval leucine 632–threonine 661 is disordered.

As to quaternary structure, probable component of the tectonic-like complex (also named MKS complex), composed of B9d1, B9d2, Cc2d2a, Mks1 and tctn. As to expression, expressed in chordotonal neurons in the antennae (at protein level). Expressed in spermatids (at protein level).

It localises to the cytoplasm. The protein localises to the cytoskeleton. Its subcellular location is the cilium basal body. The protein resides in the microtubule organizing center. It is found in the centrosome. It localises to the centriole. Its function is as follows. Probable component of the tectonic-like complex (also named MKS complex), a complex localized at the transition zone of primary cilia. Required for ciliary structure and function. The protein is Tectonic-like complex member Mks1 of Drosophila melanogaster (Fruit fly).